The following is a 464-amino-acid chain: Glycine--tRNA ligase (464 aa).

Substrate-binding residues include Arg-104 and Glu-175. ATP contacts are provided by residues 207-209 (RNE), 217-222 (FRTREF), 292-293 (EL), and 336-339 (GVNR). 222-226 (FEQME) contributes to the substrate binding site. 332–336 (EPALG) contributes to the substrate binding site.

It belongs to the class-II aminoacyl-tRNA synthetase family. As to quaternary structure, homodimer.

It is found in the cytoplasm. It catalyses the reaction tRNA(Gly) + glycine + ATP = glycyl-tRNA(Gly) + AMP + diphosphate. Its function is as follows. Catalyzes the attachment of glycine to tRNA(Gly). The chain is Glycine--tRNA ligase from Leptospira interrogans serogroup Icterohaemorrhagiae serovar Lai (strain 56601).